We begin with the raw amino-acid sequence, 155 residues long: Deoxyuridine 5'-triphosphate nucleotidohydrolase (155 aa).

Substrate-binding positions include 74–76 (RSG), Asn87, and 91–93 (LID).

The protein belongs to the dUTPase family. It depends on Mg(2+) as a cofactor.

The enzyme catalyses dUTP + H2O = dUMP + diphosphate + H(+). The protein operates within pyrimidine metabolism; dUMP biosynthesis; dUMP from dCTP (dUTP route): step 2/2. In terms of biological role, this enzyme is involved in nucleotide metabolism: it produces dUMP, the immediate precursor of thymidine nucleotides and it decreases the intracellular concentration of dUTP so that uracil cannot be incorporated into DNA. The polypeptide is Deoxyuridine 5'-triphosphate nucleotidohydrolase (Xanthomonas axonopodis pv. citri (strain 306)).